A 63-amino-acid chain; its full sequence is Putative flagellar calcium-binding protein (63 aa).

Residues 1 to 11 show a composition bias toward polar residues; that stretch reads MGCISSKSTQT. Positions 1–23 are disordered; that stretch reads MGCISSKSTQTGKKEGKTAAERK. Residues 12-23 are compositionally biased toward basic and acidic residues; it reads GKKEGKTAAERK. Positions 40 to 63 constitute an EF-hand domain; the sequence is EDKARRIELFKKFDKNNTGKLSME. Positions 53, 55, 57, and 59 each coordinate Ca(2+).

Belongs to the calflagin family.

Its subcellular location is the cell projection. It localises to the cilium. The protein localises to the flagellum. This Crithidia fasciculata protein is Putative flagellar calcium-binding protein (CABP).